The primary structure comprises 107 residues: Nucleoid-associated protein amb4104 (107 aa).

It belongs to the YbaB/EbfC family. Homodimer.

It localises to the cytoplasm. It is found in the nucleoid. Functionally, binds to DNA and alters its conformation. May be involved in regulation of gene expression, nucleoid organization and DNA protection. The chain is Nucleoid-associated protein amb4104 from Paramagnetospirillum magneticum (strain ATCC 700264 / AMB-1) (Magnetospirillum magneticum).